Consider the following 356-residue polypeptide: Chorismate synthase (356 aa).

2 residues coordinate NADP(+): Arg-44 and Arg-49. FMN is bound by residues His-121 to Ser-123, Gly-278, Lys-293 to Ser-297, and Arg-320.

Belongs to the chorismate synthase family. FMNH2 serves as cofactor.

The enzyme catalyses 5-O-(1-carboxyvinyl)-3-phosphoshikimate = chorismate + phosphate. It participates in metabolic intermediate biosynthesis; chorismate biosynthesis; chorismate from D-erythrose 4-phosphate and phosphoenolpyruvate: step 7/7. Its function is as follows. Catalyzes the anti-1,4-elimination of the C-3 phosphate and the C-6 proR hydrogen from 5-enolpyruvylshikimate-3-phosphate (EPSP) to yield chorismate, which is the branch point compound that serves as the starting substrate for the three terminal pathways of aromatic amino acid biosynthesis. This reaction introduces a second double bond into the aromatic ring system. The protein is Chorismate synthase of Thermococcus gammatolerans (strain DSM 15229 / JCM 11827 / EJ3).